A 189-amino-acid polypeptide reads, in one-letter code: Hypoxanthine/guanine phosphoribosyltransferase (189 aa).

The protein belongs to the purine/pyrimidine phosphoribosyltransferase family. Archaeal HPRT subfamily. Homodimer.

The protein resides in the cytoplasm. The catalysed reaction is IMP + diphosphate = hypoxanthine + 5-phospho-alpha-D-ribose 1-diphosphate. The enzyme catalyses GMP + diphosphate = guanine + 5-phospho-alpha-D-ribose 1-diphosphate. Its pathway is purine metabolism; IMP biosynthesis via salvage pathway; IMP from hypoxanthine: step 1/1. Catalyzes a salvage reaction resulting in the formation of IMP that is energically less costly than de novo synthesis. This Methanothrix soehngenii (strain ATCC 5969 / DSM 3671 / JCM 10134 / NBRC 103675 / OCM 69 / GP-6) (Methanosaeta concilii) protein is Hypoxanthine/guanine phosphoribosyltransferase.